The sequence spans 458 residues: BTB/POZ domain-containing protein At5g41330 (458 aa).

The 62-residue stretch at 11–72 (NVVSINVGGR…LRTGNLPARS (62 aa)) folds into the BTB domain. 3 WD repeats span residues 259–305 (DSAI…MVWE), 360–399 (LNERRGVGSKIESYGNHVFCSSKGSGIELWSEVITGLVGN), and 421–458 (SGENKITGLAFGGNRMFVTRKDQQSVQVWQSPSRGISI).

It participates in protein modification; protein ubiquitination. In terms of biological role, may act as a substrate-specific adapter of an E3 ubiquitin-protein ligase complex (CUL3-RBX1-BTB) which mediates the ubiquitination and subsequent proteasomal degradation of target proteins. This Arabidopsis thaliana (Mouse-ear cress) protein is BTB/POZ domain-containing protein At5g41330.